A 460-amino-acid polypeptide reads, in one-letter code: MFEDIPVDVSPMHEGERIRSANMFVELAGPKSIGAELVQVKDEVEDGKVEVKGPEIDEMEQGQVYPFAINVEVAGSELEEELESVIERRLHELCNYVKGFMHLNQRDQIWCRVSTEAKDAGFRLEHLGKALSVLFREEFPIIESIAVTLMTDEAAVQEFLETAREKYETRDSRARELSDEDVDVFYGCLMCQSFAPTHVCIVTPDRTALCGAINWFDCRAAYKMDPDGPIFEIEKGEVLDPERGEYANVNAAVEENSQGTTDRVYLHSVFGYPHTSCGCFEAVAFYIPELDGIGIVNRDFRGETPLGIPFSAMAGQCSGGKQVEGFSGLSLEYMRSPKFLQADGGYHRVIWMPRELKESVLEFIPEDVRDKIATEEDATSIKDLRRFLRDNEHPVLERAAVEETEPEEEEVEEAYPEETPIPEGVPVMAAPEMTLPAAGGFRIVLKNAKIYAEKVIIKRK.

[Ni-Fe-S] cluster is bound by residues cysteine 188, cysteine 191, cysteine 277, and cysteine 279. Over residues 402–416 the composition is skewed to acidic residues; that stretch reads EETEPEEEEVEEAYP. The tract at residues 402–422 is disordered; that stretch reads EETEPEEEEVEEAYPEETPIP.

This sequence belongs to the CdhC family. As to quaternary structure, monomer. The ACDS complex is made up of alpha, epsilon, beta, gamma and delta chains with a probable stoichiometry of (alpha(2)epsilon(2))(4)-beta(8)-(gamma(1)delta(1))(8). The cofactor is [Ni-Fe-S] cluster.

It carries out the reaction Co(I)-[corrinoid Fe-S protein] + acetyl-CoA + H(+) = methyl-Co(III)-[corrinoid Fe-S protein] + CO + CoA. In terms of biological role, part of a complex that catalyzes the reversible cleavage of acetyl-CoA, allowing autotrophic growth from CO(2). The alpha-epsilon complex generates CO from CO(2), while the beta subunit (this protein) combines the CO with CoA and a methyl group to form acetyl-CoA. The methyl group, which is incorporated into acetyl-CoA, is transferred to the beta subunit by a corrinoid iron-sulfur protein (the gamma-delta complex). The polypeptide is Acetyl-CoA decarbonylase/synthase complex subunit beta (Methanothermobacter thermautotrophicus (strain ATCC 29096 / DSM 1053 / JCM 10044 / NBRC 100330 / Delta H) (Methanobacterium thermoautotrophicum)).